Reading from the N-terminus, the 157-residue chain is ATP synthase subunit delta (157 aa).

The protein belongs to the ATPase delta chain family. In terms of assembly, F-type ATPases have 2 components, F(1) - the catalytic core - and F(0) - the membrane proton channel. F(1) has five subunits: alpha(3), beta(3), gamma(1), delta(1), epsilon(1). F(0) has three main subunits: a(1), b(2) and c(10-14). The alpha and beta chains form an alternating ring which encloses part of the gamma chain. F(1) is attached to F(0) by a central stalk formed by the gamma and epsilon chains, while a peripheral stalk is formed by the delta and b chains.

The protein localises to the cell membrane. Its function is as follows. F(1)F(0) ATP synthase produces ATP from ADP in the presence of a proton or sodium gradient. F-type ATPases consist of two structural domains, F(1) containing the extramembraneous catalytic core and F(0) containing the membrane proton channel, linked together by a central stalk and a peripheral stalk. During catalysis, ATP synthesis in the catalytic domain of F(1) is coupled via a rotary mechanism of the central stalk subunits to proton translocation. This protein is part of the stalk that links CF(0) to CF(1). It either transmits conformational changes from CF(0) to CF(1) or is implicated in proton conduction. This chain is ATP synthase subunit delta, found in Chloroflexus aggregans (strain MD-66 / DSM 9485).